A 258-amino-acid chain; its full sequence is Acyl-[acyl-carrier-protein]--UDP-N-acetylglucosamine O-acyltransferase (258 aa).

The protein belongs to the transferase hexapeptide repeat family. LpxA subfamily. Homotrimer.

The protein resides in the cytoplasm. The catalysed reaction is a (3R)-hydroxyacyl-[ACP] + UDP-N-acetyl-alpha-D-glucosamine = a UDP-3-O-[(3R)-3-hydroxyacyl]-N-acetyl-alpha-D-glucosamine + holo-[ACP]. It participates in glycolipid biosynthesis; lipid IV(A) biosynthesis; lipid IV(A) from (3R)-3-hydroxytetradecanoyl-[acyl-carrier-protein] and UDP-N-acetyl-alpha-D-glucosamine: step 1/6. Functionally, involved in the biosynthesis of lipid A, a phosphorylated glycolipid that anchors the lipopolysaccharide to the outer membrane of the cell. The protein is Acyl-[acyl-carrier-protein]--UDP-N-acetylglucosamine O-acyltransferase of Pseudomonas putida (strain ATCC 47054 / DSM 6125 / CFBP 8728 / NCIMB 11950 / KT2440).